Consider the following 211-residue polypeptide: ATP phosphoribosyltransferase (211 aa).

The protein belongs to the ATP phosphoribosyltransferase family. Short subfamily. In terms of assembly, heteromultimer composed of HisG and HisZ subunits.

The protein resides in the cytoplasm. It catalyses the reaction 1-(5-phospho-beta-D-ribosyl)-ATP + diphosphate = 5-phospho-alpha-D-ribose 1-diphosphate + ATP. The protein operates within amino-acid biosynthesis; L-histidine biosynthesis; L-histidine from 5-phospho-alpha-D-ribose 1-diphosphate: step 1/9. Catalyzes the condensation of ATP and 5-phosphoribose 1-diphosphate to form N'-(5'-phosphoribosyl)-ATP (PR-ATP). Has a crucial role in the pathway because the rate of histidine biosynthesis seems to be controlled primarily by regulation of HisG enzymatic activity. The polypeptide is ATP phosphoribosyltransferase (Lacticaseibacillus paracasei (strain ATCC 334 / BCRC 17002 / CCUG 31169 / CIP 107868 / KCTC 3260 / NRRL B-441) (Lactobacillus paracasei)).